Consider the following 219-residue polypeptide: Large ribosomal subunit protein bL25 (219 aa).

A disordered region spans residues 176–219; that stretch reads VTVVPPTDEPSEEEVEAMEGESATEEPEVVGEDKEDDEEENKED. The span at 184 to 219 shows a compositional bias: acidic residues; the sequence is EPSEEEVEAMEGESATEEPEVVGEDKEDDEEENKED.

The protein belongs to the bacterial ribosomal protein bL25 family. CTC subfamily. As to quaternary structure, part of the 50S ribosomal subunit; part of the 5S rRNA/L5/L18/L25 subcomplex. Contacts the 5S rRNA. Binds to the 5S rRNA independently of L5 and L18.

Its function is as follows. This is one of the proteins that binds to the 5S RNA in the ribosome where it forms part of the central protuberance. The chain is Large ribosomal subunit protein bL25 from Staphylococcus epidermidis (strain ATCC 35984 / DSM 28319 / BCRC 17069 / CCUG 31568 / BM 3577 / RP62A).